Here is a 399-residue protein sequence, read N- to C-terminus: Probable tRNA sulfurtransferase (399 aa).

Residues 60 to 165 form the THUMP domain; that stretch reads YAVMERLKRV…TEGTYISCET (106 aa). Residues 183 to 184, 208 to 209, arginine 265, glycine 287, and glutamine 296 contribute to the ATP site; these read LL and HF.

Belongs to the ThiI family.

It localises to the cytoplasm. It catalyses the reaction [ThiI sulfur-carrier protein]-S-sulfanyl-L-cysteine + a uridine in tRNA + 2 reduced [2Fe-2S]-[ferredoxin] + ATP + H(+) = [ThiI sulfur-carrier protein]-L-cysteine + a 4-thiouridine in tRNA + 2 oxidized [2Fe-2S]-[ferredoxin] + AMP + diphosphate. The enzyme catalyses [ThiS sulfur-carrier protein]-C-terminal Gly-Gly-AMP + S-sulfanyl-L-cysteinyl-[cysteine desulfurase] + AH2 = [ThiS sulfur-carrier protein]-C-terminal-Gly-aminoethanethioate + L-cysteinyl-[cysteine desulfurase] + A + AMP + 2 H(+). It participates in cofactor biosynthesis; thiamine diphosphate biosynthesis. Functionally, catalyzes the ATP-dependent transfer of a sulfur to tRNA to produce 4-thiouridine in position 8 of tRNAs, which functions as a near-UV photosensor. Also catalyzes the transfer of sulfur to the sulfur carrier protein ThiS, forming ThiS-thiocarboxylate. This is a step in the synthesis of thiazole, in the thiamine biosynthesis pathway. The sulfur is donated as persulfide by IscS. The polypeptide is Probable tRNA sulfurtransferase (Brevibacillus brevis (strain 47 / JCM 6285 / NBRC 100599)).